We begin with the raw amino-acid sequence, 573 residues long: MTAEAPPLGELEAIRPYPARTGPKGSLVYKLITTTDHKMIGIMYCVACISFFFIGGLLALLMRTELAAPGLQFLSNEQFNQLFTMHGTIMLLFYATPIVFGFANLVLPLQIGAPDVAFPRLNAFSFWLFVFGATIGAAGFITPGGAADFGWTAYTPLTDAIHSPGAGGDLWIMGLIVAGLGTILGAVNMITTVVCMRAPGMTMFRMPIFTWNIMVTSILILIAFPLLTAALFGLAADRHLGAHIYDAANGGVLLWQHLFWFFGHPEVYIIALPFFGIVSEIFPVFSRKPIFGYTTLVYATLSIAALSVAVWAHHMFATGAVLLPFFSFMTYLIAVPTGIKFFNWIGTMWKGQLTFETPMLFSVGFMVTFLLGGLTGVLLASPPLDFHVTDSYFVVAHFHYVLFGTIVFATFAGIYFWFPKMTGRLLDERLGKLHFWLTFIGFHTTFLVQHWLGDEGMPRRYADYLPTDGFQGLNVVSTIGAFILGASMFPFVWNVFKSWRYGEVVTVDDPWGYGNSLEWATSCPPPRHNFTELPRIRSERPAFELHYPHMVERLRAEAHVGRHHDEPAMVTSS.

A helical transmembrane segment spans residues 40–60 (IGIMYCVACISFFFIGGLLAL). Position 86 (His86) interacts with Fe(II)-heme a. 6 consecutive transmembrane segments (helical) span residues 89–109 (IMLL…VLPL), 121–141 (LNAF…AGFI), 170–190 (LWIM…VNMI), 213–233 (IMVT…ALFG), 258–278 (LFWF…FGIV), and 290–310 (IFGY…SVAV). His264 and Tyr268 together coordinate Cu cation. A cross-link (1'-histidyl-3'-tyrosine (His-Tyr)) is located at residues 264-268 (HPEVY). Cu cation-binding residues include His313 and His314. 2 helical membrane-spanning segments follow: residues 315-335 (MFAT…LIAV) and 359-379 (MLFS…GVLL). His397 lines the heme a3 pocket. 3 helical membrane passes run 398-418 (FHYV…YFWF), 433-453 (LHFW…HWLG), and 476-496 (VSTI…WNVF). His399 contributes to the Fe(II)-heme a binding site.

It belongs to the heme-copper respiratory oxidase family.

The protein resides in the cell membrane. The catalysed reaction is 4 Fe(II)-[cytochrome c] + O2 + 8 H(+)(in) = 4 Fe(III)-[cytochrome c] + 2 H2O + 4 H(+)(out). It functions in the pathway energy metabolism; oxidative phosphorylation. Its function is as follows. Cytochrome c oxidase is the component of the respiratory chain that catalyzes the reduction of oxygen to water. Subunits 1-3 form the functional core of the enzyme complex. CO I is the catalytic subunit of the enzyme. Electrons originating in cytochrome c are transferred via the copper A center of subunit 2 and heme A of subunit 1 to the bimetallic center formed by heme A3 and copper B. The chain is Probable cytochrome c oxidase subunit 1 (ctaD) from Mycobacterium bovis (strain ATCC BAA-935 / AF2122/97).